The sequence spans 207 residues: Small ribosomal subunit protein uS4 (207 aa).

An S4 RNA-binding domain is found at 97 to 159 (SRLDNVCYRM…AKSQLRIQAA (63 aa)).

Belongs to the universal ribosomal protein uS4 family. Part of the 30S ribosomal subunit. Contacts protein S5. The interaction surface between S4 and S5 is involved in control of translational fidelity.

In terms of biological role, one of the primary rRNA binding proteins, it binds directly to 16S rRNA where it nucleates assembly of the body of the 30S subunit. Functionally, with S5 and S12 plays an important role in translational accuracy. This Halorhodospira halophila (strain DSM 244 / SL1) (Ectothiorhodospira halophila (strain DSM 244 / SL1)) protein is Small ribosomal subunit protein uS4.